Here is a 325-residue protein sequence, read N- to C-terminus: Phosphatidylserine decarboxylase proenzyme (325 aa).

Catalysis depends on charge relay system; for autoendoproteolytic cleavage activity residues Asp90, His147, and Ser253. The Schiff-base intermediate with substrate; via pyruvic acid; for decarboxylase activity role is filled by Ser253. A Pyruvic acid (Ser); by autocatalysis modification is found at Ser253. The segment at 281–325 (MASKMSSQKAITPEQTTETPVQASNEFDDNAGETKKDTPSEGADS) is disordered. Positions 284 to 305 (KMSSQKAITPEQTTETPVQASN) are enriched in polar residues.

Belongs to the phosphatidylserine decarboxylase family. PSD-B subfamily. Prokaryotic type I sub-subfamily. As to quaternary structure, heterodimer of a large membrane-associated beta subunit and a small pyruvoyl-containing alpha subunit. It depends on pyruvate as a cofactor. Is synthesized initially as an inactive proenzyme. Formation of the active enzyme involves a self-maturation process in which the active site pyruvoyl group is generated from an internal serine residue via an autocatalytic post-translational modification. Two non-identical subunits are generated from the proenzyme in this reaction, and the pyruvate is formed at the N-terminus of the alpha chain, which is derived from the carboxyl end of the proenzyme. The autoendoproteolytic cleavage occurs by a canonical serine protease mechanism, in which the side chain hydroxyl group of the serine supplies its oxygen atom to form the C-terminus of the beta chain, while the remainder of the serine residue undergoes an oxidative deamination to produce ammonia and the pyruvoyl prosthetic group on the alpha chain. During this reaction, the Ser that is part of the protease active site of the proenzyme becomes the pyruvoyl prosthetic group, which constitutes an essential element of the active site of the mature decarboxylase.

It is found in the cell membrane. It carries out the reaction a 1,2-diacyl-sn-glycero-3-phospho-L-serine + H(+) = a 1,2-diacyl-sn-glycero-3-phosphoethanolamine + CO2. It participates in phospholipid metabolism; phosphatidylethanolamine biosynthesis; phosphatidylethanolamine from CDP-diacylglycerol: step 2/2. Catalyzes the formation of phosphatidylethanolamine (PtdEtn) from phosphatidylserine (PtdSer). The polypeptide is Phosphatidylserine decarboxylase proenzyme (Alteromonas mediterranea (strain DSM 17117 / CIP 110805 / LMG 28347 / Deep ecotype)).